We begin with the raw amino-acid sequence, 101 residues long: MASKVIVIALLCIALAAFVQGAPQYTHGEEPEYDEDDGADEPVQPHSSSNHADTEDDFDLSLLDKPYANAPENADPGRRPEFLKQHNNENQSDSSSGSTEN.

The signal sequence occupies residues 1–21 (MASKVIVIALLCIALAAFVQG). The disordered stretch occupies residues 26–101 (THGEEPEYDE…SDSSSGSTEN (76 aa)). Residues 31–40 (PEYDEDDGAD) are compositionally biased toward acidic residues. Residues 75-78 (DPGR) are blocks active site cleft of host thrombin in a reverse direction compared to substrates. Basic and acidic residues predominate over residues 75 to 87 (DPGRRPEFLKQHN). Over residues 88-101 (NENQSDSSSGSTEN) the composition is skewed to polar residues. N-linked (GlcNAc...) asparagine glycosylation occurs at Asn-90.

The protein belongs to the anophelin family. Interacts with human F2 (thrombin); the interaction results in thrombin inhibition.

It is found in the secreted. Salivary protein with anticoagulant activity that inhibits host thrombin (F2). This chain is Salivary thrombin inhibitor anophelin, found in Anopheles stephensi (Indo-Pakistan malaria mosquito).